Here is a 178-residue protein sequence, read N- to C-terminus: Platelet inhibitor triplatin-2 (178 aa).

The signal sequence occupies residues 1–18 (MKMIISLTFLGILMLAFA). 3 disulfide bridges follow: cysteine 25/cysteine 134, cysteine 60/cysteine 178, and cysteine 90/cysteine 106.

It belongs to the calycin superfamily. Triabin family. As to expression, expressed in salivary glands.

Its subcellular location is the secreted. In terms of biological role, inhibits platelet aggregation and vasoconstriction through binding to distinct eicosanoids involved in inflammation (acts as a scavenger), and has a role in inhibiting host innate immunity by impairing platelet-assisted formation of neutrophil extracellular traps (NETs). Inhibits platelet aggregation by collagen, and low doses of thromboxane A2 mimetic (TXA2 mimetic), and arachidonic acid (AA) without affecting aggregation induced by ADP, convulxin (GP6 agonist), and PMA. Binds to TXA2, TXB2, prostaglandine H2 mimetic (PGH2 mimetic), PGJ2, and PGF2alpha. Binding is not observed to leukotrienes, AA, and biogenic amines (PGE1, 5(S)-HETE, 12(S)-HETE, 20-HETE, norepinephrine, epinephrine, serotonin, LTC4 and ADP). Induces relaxation of aorta rat previously contracted with TXA2 mimetic. Moreover, it also impairs platelet-assisted formation of neutrophil extracellular traps (NETs). NETs are web-like structures of DNA and proteins that play an important role in killing of pathogens. In addition, NETs are implicated in thrombus formation. In vivo, this protein exhibits antithrombotic activity in two distinct mice models that are highly dependent on platelets. It is noteworthy that it inhibits thrombosis without promoting excessive bleeding. The protein is Platelet inhibitor triplatin-2 of Triatoma infestans (Assassin bug).